Here is a 322-residue protein sequence, read N- to C-terminus: Putative pyruvyl transferase EpsO (322 aa).

Belongs to the polysaccharide pyruvyl transferase family.

In terms of biological role, may be involved in the production of the exopolysaccharide (EPS) component of the extracellular matrix during biofilm formation. EPS is responsible for the adhesion of chains of cells into bundles. This is Putative pyruvyl transferase EpsO (epsO) from Bacillus subtilis (strain 168).